The primary structure comprises 447 residues: 3-phosphoshikimate 1-carboxyvinyltransferase 2 (447 aa).

Residues Lys40, Ser41, and Arg45 each contribute to the 3-phosphoshikimate site. Position 40 (Lys40) interacts with phosphoenolpyruvate. 2 residues coordinate phosphoenolpyruvate: Gly109 and Arg138. Ser184, Ser185, Gln186, Asp329, and His356 together coordinate 3-phosphoshikimate. Residue Gln186 coordinates phosphoenolpyruvate. The Proton acceptor role is filled by Asp329. Residues Arg360, Arg403, and Lys428 each contribute to the phosphoenolpyruvate site.

This sequence belongs to the EPSP synthase family. As to quaternary structure, monomer.

The protein localises to the cytoplasm. The catalysed reaction is 3-phosphoshikimate + phosphoenolpyruvate = 5-O-(1-carboxyvinyl)-3-phosphoshikimate + phosphate. Its pathway is metabolic intermediate biosynthesis; chorismate biosynthesis; chorismate from D-erythrose 4-phosphate and phosphoenolpyruvate: step 6/7. Its function is as follows. Catalyzes the transfer of the enolpyruvyl moiety of phosphoenolpyruvate (PEP) to the 5-hydroxyl of shikimate-3-phosphate (S3P) to produce enolpyruvyl shikimate-3-phosphate and inorganic phosphate. In Halalkalibacterium halodurans (strain ATCC BAA-125 / DSM 18197 / FERM 7344 / JCM 9153 / C-125) (Bacillus halodurans), this protein is 3-phosphoshikimate 1-carboxyvinyltransferase 2.